The following is a 468-amino-acid chain: Glutamate--tRNA ligase (468 aa).

The short motif at 10-20 (PSPTGYLHIGG) is the 'HIGH' region element. Positions 252–256 (KLSKR) match the 'KMSKS' region motif. ATP is bound at residue K255.

It belongs to the class-I aminoacyl-tRNA synthetase family. Glutamate--tRNA ligase type 1 subfamily. In terms of assembly, monomer.

The protein localises to the cytoplasm. It catalyses the reaction tRNA(Glu) + L-glutamate + ATP = L-glutamyl-tRNA(Glu) + AMP + diphosphate. Catalyzes the attachment of glutamate to tRNA(Glu) in a two-step reaction: glutamate is first activated by ATP to form Glu-AMP and then transferred to the acceptor end of tRNA(Glu). The sequence is that of Glutamate--tRNA ligase from Mycoplasmopsis pulmonis (strain UAB CTIP) (Mycoplasma pulmonis).